Consider the following 588-residue polypeptide: Adenine deaminase (588 aa).

Belongs to the metallo-dependent hydrolases superfamily. Adenine deaminase family. In terms of assembly, homodimer. Requires Mn(2+) as cofactor.

The catalysed reaction is adenine + H2O + H(+) = hypoxanthine + NH4(+). This Escherichia fergusonii (strain ATCC 35469 / DSM 13698 / CCUG 18766 / IAM 14443 / JCM 21226 / LMG 7866 / NBRC 102419 / NCTC 12128 / CDC 0568-73) protein is Adenine deaminase.